Reading from the N-terminus, the 2635-residue chain is Large tegument protein deneddylase (2635 aa).

Residues 1–233 (MAAQPLYMEG…LHGPRMDISR (233 aa)) are deubiquitination activity. The Peptidase C76 domain maps to 9-223 (EGMASTHQAN…NHYRTIVFEE (215 aa)). Residues C29, D159, and H161 contribute to the active site. Disordered regions lie at residues 243-497 (ITSP…DRYA), 2238-2269 (PLTITPNKPTGTPHVSPEADPITERKRGQQPK), 2357-2438 (RTAL…KRAA), and 2500-2533 (KAGWDTAPDIPLPHSSPESSPPTSPQPIRVDDKS). Residues 245-255 (SPSVSPAPSEA) are compositionally biased toward low complexity. 2 stretches are compositionally biased toward basic and acidic residues: residues 256–270 (PLRRDSTQSQDETRP) and 282–295 (PTDRPRPPHQDRPP). Residues 316–325 (KTGRGGNEGR) are interaction with inner tegument protein. The segment covering 330–346 (PPDEHQPPHITAEHMDQ) has biased composition (basic and acidic residues). Over residues 448-461 (DDPLTPLYPLTDTP) the composition is skewed to low complexity. A compositionally biased stretch (low complexity) spans 2379–2402 (TLTFRLPPTAPTPATAALETKTTP). Residues 2425–2437 (HARDTSPPAEKRA) are compositionally biased toward basic and acidic residues.

This sequence belongs to the herpesviridae large tegument protein family. As to quaternary structure, interacts with host CUL1 and CUL4A; these interactions inhibit the E3 ligase activity of cullins. Interacts with inner tegument protein. Interacts with capsid vertex specific component CVC2. Interacts with the major capsid protein/MCP.

It is found in the virion tegument. The protein localises to the host cytoplasm. Its subcellular location is the host nucleus. It catalyses the reaction Thiol-dependent hydrolysis of ester, thioester, amide, peptide and isopeptide bonds formed by the C-terminal Gly of ubiquitin (a 76-residue protein attached to proteins as an intracellular targeting signal).. Large tegument protein that plays multiple roles in the viral cycle. During viral entry, remains associated with the capsid while most of the tegument is detached and participates in the capsid transport toward the host nucleus. Plays a role in the routing of the capsid at the nuclear pore complex and subsequent uncoating. Within the host nucleus, acts as a deneddylase and promotes the degradation of nuclear CRLs (cullin-RING ubiquitin ligases) and thereby stabilizes nuclear CRL substrates, while cytoplasmic CRLs remain unaffected. These modifications prevent host cell cycle S-phase progression and create a favorable environment allowing efficient viral genome replication. Participates later in the secondary envelopment of capsids. Indeed, plays a linker role for the association of the outer viral tegument to the capsids together with the inner tegument protein. In Homo sapiens (Human), this protein is Large tegument protein deneddylase.